The primary structure comprises 332 residues: Phospholipase A2 inhibitor beta (332 aa).

Positions 1 to 23 (MKSSVPSLLFVSLVMSLNSYTQQ) are cleaved as a signal peptide. An N-linked (GlcNAc...) asparagine glycan is attached at Asn35. 8 LRR repeats span residues 78-101 (LPNL…LFRN), 103-125 (PELH…IFTS), 127-149 (TSLT…WFET), 150-173 (LKEL…CFDK), 175-197 (EKLT…MFSG), 198-221 (LDNL…SFHG), 223-245 (PKLS…VFQP), and 247-269 (NHXV…VAIP). The N-linked (GlcNAc...) asparagine glycan is linked to Asn232. Residue Asn272 is glycosylated (N-linked (GlcNAc...) asparagine). The LRRCT domain occupies 280-331 (NPWACNCRMDNLLTWVKEHKIDLYSKQEIVCAFPKSFKGEEATSLHRSQICP).

The protein belongs to the beta-type phospholipase A2 inhibitor family. Homotrimer.

It is found in the secreted. Inhibits the enzymatic activity of the basic phospholipase A2 (PLA2). The sequence is that of Phospholipase A2 inhibitor beta from Elaphe climacophora (Japanese rat snake).